The sequence spans 93 residues: MRNYELMTVFPVEEDLYKPGIDALHSILADFGVQIKSEEPFGDRDLAYEIKKKTKGRYVLFNIEADPAKMIELDKRFKLITQMLTYLFVRLED.

The protein belongs to the bacterial ribosomal protein bS6 family.

In terms of biological role, binds together with bS18 to 16S ribosomal RNA. The sequence is that of Small ribosomal subunit protein bS6 from Treponema denticola (strain ATCC 35405 / DSM 14222 / CIP 103919 / JCM 8153 / KCTC 15104).